Here is a 795-residue protein sequence, read N- to C-terminus: Plakophilin-2 (795 aa).

Positions 1–318 (MAVPGSLAEC…MTLERAVNML (318 aa)) are required for binding to single-stranded DNA. A Phosphoserine modification is found at Ser-44. Arg-46 carries the post-translational modification Omega-N-methylarginine. Ser-82, Ser-132, Ser-135, Ser-151, Ser-154, Ser-155, Ser-172, Ser-188, and Ser-232 each carry phosphoserine. Disordered stretches follow at residues 197–233 (GTARRPPGCGSFSDAVFDNGPLKPTMPTHPPGTSHSA) and 245–274 (SQARLQSTQSRTARSSWPRSSVRSSLREPG). Residues 245–257 (SQARLQSTQSRTA) are compositionally biased toward polar residues. Positions 258–268 (RSSWPRSSVRS) are enriched in low complexity. A phosphoserine mark is found at Ser-265 and Ser-287. 8 ARM repeats span residues 299–339 (DAQL…QHES), 343–382 (SEARKRVNQLRGIPKLLQLLKLQNEDVQRAACGALRNLVF), 385–425 (NDNK…NLSS), 484–530 (PDGR…NLSY), 585–625 (PHGI…NLTA), 633–672 (LVARMVVQKENGLQHTRKMLHVGDPSVKKTAVSLLRNLSR), 677–718 (QNEI…NLMQ), and 721–763 (YQNA…SLWA).

Belongs to the beta-catenin family. Interacts with DSC2. Interacts with JUP. Interacts with KRT5/CK5, KRT8/CK8, KRT14/CK14, KRT18/CK18 and VIM. Interacts (via N-terminus) with MARK3/C-TAK1. Interacts with DSP. Interacts with DSG1, DSG2 and DSG3. Interacts (via N-terminus) with CTNNB1. Interacts with CDH1. Interacts with the RNA polymerase III (Pol III) complex proteins POLR3A/RPC155, POLR3F/RPC39 and POLR3C/RPC82. Interacts with CTNNA3. Interacts (via N-terminus) with SCN5A/Nav1.5. Interacts with ANK3/ANKG and GJA1/CX43. Expressed in cardiomyocytes in the heart (at protein level).

The protein resides in the nucleus. Its subcellular location is the cell junction. It localises to the desmosome. The protein localises to the cytoplasm. In terms of biological role, a component of desmosome cell-cell junctions which are required for positive regulation of cellular adhesion. Regulates focal adhesion turnover resulting in changes in focal adhesion size, cell adhesion and cell spreading, potentially via transcriptional modulation of beta-integrins. Required to maintain gingival epithelial barrier function. Important component of the desmosome that is also required for localization of desmosome component proteins such as DSC2, DSG2 and JUP to the desmosome cell-cell junction. Required for the formation of desmosome cell junctions in cardiomyocytes, thereby required for the correct formation of the heart, specifically trabeculation and formation of the atria walls. Loss of desmosome cell junctions leads to mis-localization of DSP and DSG2 resulting in disruption of cell-cell adhesion and disordered intermediate filaments. Modulates profibrotic gene expression in cardiomyocytes via regulation of DSP expression and subsequent activation of downstream TGFB1 and MAPK14/p38 MAPK signaling. Required for cardiac sodium current propagation and electrical synchrony in cardiac myocytes, via ANK3 stabilization and modulation of SCN5A/Nav1.5 localization to cell-cell junctions. Required for mitochondrial function, nuclear envelope integrity and positive regulation of SIRT3 transcription via maintaining DES localization at its nuclear envelope and cell tip anchoring points, and thereby preserving regulation of the transcriptional program. Maintenance of nuclear envelope integrity protects against DNA damage and transcriptional dysregulation of genes, especially those involved in the electron transport chain, thereby preserving mitochondrial function and protecting against superoxide radical anion generation. Binds single-stranded DNA (ssDNA). May regulate the localization of GJA1 to gap junctions in intercalated disks of the heart. The polypeptide is Plakophilin-2 (Mus musculus (Mouse)).